Reading from the N-terminus, the 325-residue chain is Polyamine aminopropyltransferase (325 aa).

The PABS domain maps to 11-248 (SSMAEDFAVE…TLWAMAMASD (238 aa)). Position 44 (Gln44) interacts with S-methyl-5'-thioadenosine. His75 and Asp99 together coordinate spermidine. Residues Glu119 and 151–152 (DG) contribute to the S-methyl-5'-thioadenosine site. Asp169 functions as the Proton acceptor in the catalytic mechanism. Pro176 serves as a coordination point for S-methyl-5'-thioadenosine.

It belongs to the spermidine/spermine synthase family. In terms of assembly, homodimer or homotetramer.

It localises to the cytoplasm. The catalysed reaction is S-adenosyl 3-(methylsulfanyl)propylamine + putrescine = S-methyl-5'-thioadenosine + spermidine + H(+). It functions in the pathway amine and polyamine biosynthesis; spermidine biosynthesis; spermidine from putrescine: step 1/1. In terms of biological role, catalyzes the irreversible transfer of a propylamine group from the amino donor S-adenosylmethioninamine (decarboxy-AdoMet) to putrescine (1,4-diaminobutane) to yield spermidine. In Nitrosomonas europaea (strain ATCC 19718 / CIP 103999 / KCTC 2705 / NBRC 14298), this protein is Polyamine aminopropyltransferase.